Reading from the N-terminus, the 286-residue chain is Putative cyclin-H (286 aa).

One can recognise a Cyclin N-terminal domain in the interval 79-148; sequence AIIYIKRFYL…ILESLNFNLI (70 aa). Residues 235–286 form a disordered region; it reads NNNNNNNNNNNNNNNNNNNNNNNNNNNNNNNNNNNNNNNNNNNNNNNNNLLL.

Belongs to the cyclin family. Cyclin C subfamily.

The protein localises to the nucleus. Its function is as follows. May regulate cdk7 involved in transcription regulation and cell cycle progression. This is Putative cyclin-H (cycH) from Dictyostelium discoideum (Social amoeba).